We begin with the raw amino-acid sequence, 885 residues long: Alanine--tRNA ligase (885 aa).

H564, H568, C676, and H680 together coordinate Zn(2+).

Belongs to the class-II aminoacyl-tRNA synthetase family. Requires Zn(2+) as cofactor.

It localises to the cytoplasm. It carries out the reaction tRNA(Ala) + L-alanine + ATP = L-alanyl-tRNA(Ala) + AMP + diphosphate. Its function is as follows. Catalyzes the attachment of alanine to tRNA(Ala) in a two-step reaction: alanine is first activated by ATP to form Ala-AMP and then transferred to the acceptor end of tRNA(Ala). Also edits incorrectly charged Ser-tRNA(Ala) and Gly-tRNA(Ala) via its editing domain. This chain is Alanine--tRNA ligase, found in Brucella ovis (strain ATCC 25840 / 63/290 / NCTC 10512).